A 166-amino-acid polypeptide reads, in one-letter code: KH homology domain-containing protein 1C (166 aa).

Positions 19–78 (PLVFDMEEDKEDYIFGPHDEYLHTLEVHSNTLIQLERWFTPTGQTRVTVVGPLKARLWVM) constitute a KH; atypical domain.

Belongs to the KHDC1 family.

This chain is KH homology domain-containing protein 1C (Khdc1c), found in Mus musculus (Mouse).